A 324-amino-acid polypeptide reads, in one-letter code: Acetyl-coenzyme A carboxylase carboxyl transferase subunit alpha (324 aa).

Positions 44-298 (ILQRKLLNLK…KNKIRDQLDF (255 aa)) constitute a CoA carboxyltransferase C-terminal domain.

The protein belongs to the AccA family. As to quaternary structure, acetyl-CoA carboxylase is a heterohexamer composed of biotin carboxyl carrier protein (accB), biotin carboxylase (accC) and two subunits each of ACCase subunit alpha (accA) and ACCase subunit beta (accD).

The protein resides in the plastid. Its subcellular location is the chloroplast. The catalysed reaction is N(6)-carboxybiotinyl-L-lysyl-[protein] + acetyl-CoA = N(6)-biotinyl-L-lysyl-[protein] + malonyl-CoA. It functions in the pathway lipid metabolism; malonyl-CoA biosynthesis; malonyl-CoA from acetyl-CoA: step 1/1. Functionally, component of the acetyl coenzyme A carboxylase (ACC) complex. First, biotin carboxylase catalyzes the carboxylation of biotin on its carrier protein (BCCP) and then the CO(2) group is transferred by the carboxyltransferase to acetyl-CoA to form malonyl-CoA. The chain is Acetyl-coenzyme A carboxylase carboxyl transferase subunit alpha from Cyanidium caldarium (Red alga).